The sequence spans 208 residues: ATP-dependent Clp protease proteolytic subunit (208 aa).

The active-site Nucleophile is the Ser-105. Residue His-130 is part of the active site.

Belongs to the peptidase S14 family. As to quaternary structure, fourteen ClpP subunits assemble into 2 heptameric rings which stack back to back to give a disk-like structure with a central cavity, resembling the structure of eukaryotic proteasomes.

The protein localises to the cytoplasm. The enzyme catalyses Hydrolysis of proteins to small peptides in the presence of ATP and magnesium. alpha-casein is the usual test substrate. In the absence of ATP, only oligopeptides shorter than five residues are hydrolyzed (such as succinyl-Leu-Tyr-|-NHMec, and Leu-Tyr-Leu-|-Tyr-Trp, in which cleavage of the -Tyr-|-Leu- and -Tyr-|-Trp bonds also occurs).. In terms of biological role, cleaves peptides in various proteins in a process that requires ATP hydrolysis. Has a chymotrypsin-like activity. Plays a major role in the degradation of misfolded proteins. This is ATP-dependent Clp protease proteolytic subunit from Xylella fastidiosa (strain 9a5c).